The following is a 91-amino-acid chain: MIPRVFILLTLVALFCACSTLAAVSHIEVDCIPAFTVYLLYGFVTLTLICSLITVVIAFIQCIDWVCVRFAYLRHHPQYRDRTIAELLRIL.

The N-terminal stretch at 1 to 22 (MIPRVFILLTLVALFCACSTLA) is a signal peptide. Residues 23–34 (AVSHIEVDCIPA) are Lumenal-facing. The helical transmembrane segment at 35–60 (FTVYLLYGFVTLTLICSLITVVIAFI) threads the bilayer. The Cytoplasmic portion of the chain corresponds to 61–91 (QCIDWVCVRFAYLRHHPQYRDRTIAELLRIL).

Belongs to the adenoviridae E3B family.

It localises to the host endoplasmic reticulum membrane. In terms of biological role, down-regulates the EGF receptor. This Homo sapiens (Human) protein is Early E3B 10.4 kDa protein.